The primary structure comprises 465 residues: Cysteine--tRNA ligase (465 aa).

Residue cysteine 27 participates in Zn(2+) binding. Residues 29-39 (PTVYNFFHIGN) carry the 'HIGH' region motif. Cysteine 207, histidine 232, and glutamate 236 together coordinate Zn(2+). The 'KMSKS' region signature appears at 264 to 268 (KMSKS). An ATP-binding site is contributed by lysine 267.

The protein belongs to the class-I aminoacyl-tRNA synthetase family. Monomer. The cofactor is Zn(2+).

Its subcellular location is the cytoplasm. It carries out the reaction tRNA(Cys) + L-cysteine + ATP = L-cysteinyl-tRNA(Cys) + AMP + diphosphate. The sequence is that of Cysteine--tRNA ligase from Clostridium botulinum (strain Okra / Type B1).